A 443-amino-acid chain; its full sequence is Proline--tRNA ligase (443 aa).

The protein belongs to the class-II aminoacyl-tRNA synthetase family. ProS type 2 subfamily. As to quaternary structure, homodimer.

The protein localises to the cytoplasm. The enzyme catalyses tRNA(Pro) + L-proline + ATP = L-prolyl-tRNA(Pro) + AMP + diphosphate. In terms of biological role, catalyzes the attachment of proline to tRNA(Pro) in a two-step reaction: proline is first activated by ATP to form Pro-AMP and then transferred to the acceptor end of tRNA(Pro). The polypeptide is Proline--tRNA ligase (Methylobacterium nodulans (strain LMG 21967 / CNCM I-2342 / ORS 2060)).